A 93-amino-acid chain; its full sequence is Beta-defensin 128 (93 aa).

Positions 1 to 18 are cleaved as a signal peptide; it reads MKLFLVLIILLFEVLTDG. Disulfide bonds link cysteine 24–cysteine 52, cysteine 32–cysteine 46, and cysteine 36–cysteine 53.

This sequence belongs to the beta-defensin family.

The protein localises to the secreted. In terms of biological role, has antibacterial activity. This chain is Beta-defensin 128 (DEFB128), found in Pongo pygmaeus (Bornean orangutan).